Here is a 270-residue protein sequence, read N- to C-terminus: Type III pantothenate kinase (270 aa).

Position 6-13 (6-13 (DAGNTNIV)) interacts with ATP. Residue 107 to 110 (GADR) coordinates substrate. The active-site Proton acceptor is the D109. D129 serves as a coordination point for K(+). Residue T132 participates in ATP binding. T184 contributes to the substrate binding site.

This sequence belongs to the type III pantothenate kinase family. In terms of assembly, homodimer. Requires NH4(+) as cofactor. The cofactor is K(+).

It localises to the cytoplasm. The enzyme catalyses (R)-pantothenate + ATP = (R)-4'-phosphopantothenate + ADP + H(+). It participates in cofactor biosynthesis; coenzyme A biosynthesis; CoA from (R)-pantothenate: step 1/5. Functionally, catalyzes the phosphorylation of pantothenate (Pan), the first step in CoA biosynthesis. This chain is Type III pantothenate kinase, found in Gluconobacter oxydans (strain 621H) (Gluconobacter suboxydans).